The primary structure comprises 30 residues: GIPCGESCVFIPCITSVAGCSCKSKVCYRN.

The segment at residues 1–30 (GIPCGESCVFIPCITSVAGCSCKSKVCYRN) is a cross-link (cyclopeptide (Gly-Asn)). Disulfide bonds link Cys-4–Cys-20, Cys-8–Cys-22, and Cys-13–Cys-27.

Post-translationally, this is a cyclic peptide.

Functionally, probably participates in a plant defense mechanism. Inhibits the cytopathic effects of the human immunodeficiency virus. The polypeptide is Circulin-C (Chassalia parviflora).